The chain runs to 107 residues: Putative regulatory protein BCG9842_A0044 (107 aa).

The protein belongs to the RemA family.

This Bacillus cereus (strain G9842) protein is Putative regulatory protein BCG9842_A0044.